Here is a 70-residue protein sequence, read N- to C-terminus: Large ribosomal subunit protein bL31 (70 aa).

Lys-8 carries the post-translational modification N6-acetyllysine. Residues Cys-16, Cys-18, Cys-37, and Cys-40 each contribute to the Zn(2+) site.

It belongs to the bacterial ribosomal protein bL31 family. Type A subfamily. Part of the 50S ribosomal subunit. It depends on Zn(2+) as a cofactor.

Functionally, binds the 23S rRNA. The chain is Large ribosomal subunit protein bL31 from Shigella flexneri.